The sequence spans 1026 residues: RecBCD enzyme subunit RecB (1026 aa).

The UvrD-like helicase ATP-binding domain occupies 1-438 (MSSFDIFSPT…LILDTNYRST (438 aa)). Residues 1-766 (MSSFDIFSPT…LANYANITQH (766 aa)) are DNA-binding and helicase activity, interacts with RecC. 21-28 (ASAGTGKT) is an ATP binding site. The 249-residue stretch at 452-700 (PSPFLETPQT…KITTVHSSKG (249 aa)) folds into the UvrD-like helicase C-terminal domain. Residues 815–1026 (SQPIYSFSST…KGNGFLQPSP (212 aa)) are nuclease activity, interacts with RecD and RecA. Residues H854, D940, and D953 each contribute to the Mg(2+) site. D953 acts as the For nuclease activity in catalysis.

It belongs to the helicase family. UvrD subfamily. As to quaternary structure, heterotrimer of RecB, RecC and RecD. All subunits contribute to DNA-binding. Interacts with RecA. Mg(2+) is required as a cofactor.

The catalysed reaction is Exonucleolytic cleavage (in the presence of ATP) in either 5'- to 3'- or 3'- to 5'-direction to yield 5'-phosphooligonucleotides.. It catalyses the reaction Couples ATP hydrolysis with the unwinding of duplex DNA by translocating in the 3'-5' direction.. It carries out the reaction ATP + H2O = ADP + phosphate + H(+). In terms of biological role, a helicase/nuclease that prepares dsDNA breaks (DSB) for recombinational DNA repair. Binds to DSBs and unwinds DNA via a highly rapid and processive ATP-dependent bidirectional helicase activity. Unwinds dsDNA until it encounters a Chi (crossover hotspot instigator) sequence from the 3' direction. Cuts ssDNA a few nucleotides 3' to the Chi site. The properties and activities of the enzyme are changed at Chi. The Chi-altered holoenzyme produces a long 3'-ssDNA overhang and facilitates RecA-binding to the ssDNA for homologous DNA recombination and repair. Holoenzyme degrades any linearized DNA that is unable to undergo homologous recombination. In the holoenzyme this subunit contributes ATPase, 3'-5' helicase, exonuclease activity and loads RecA onto ssDNA. In Chlamydia muridarum (strain MoPn / Nigg), this protein is RecBCD enzyme subunit RecB.